Here is a 340-residue protein sequence, read N- to C-terminus: MGYRVAIVGATGEVGRTFLKVLEERNFPVDELVLYASERSEGKVLTFKGKEYTVKALNKENSFKGIDIALFSAGGSTSKEWAPKFAKDGVVVIDNSSAWRMDPDVPLVVPEVNPEDVKDFKKKGIIANPNCSTIQMVVALKPIYDKAGIKRVVVSTYQAVSGAGAKAIEDLKNQTKAWCEGKEMPKAQKFPHQIAFNALPHIDVFFEDGYTKEENKMLYETRKIMHDENIKVSATCVRIPVFYGHSESISMETEKEISPEEAREVLKNAPGVIVIDNPQNNEYPMPIMAEGRDEVFVGRIRKDRVFEPGLSMWVVADNIRKGAATNAVQIAELLVKEGLI.

NADP(+)-binding positions include 11-14 (TGEV) and 39-40 (RS). Arg-100 serves as a coordination point for phosphate. Cys-131 acts as the Acyl-thioester intermediate in catalysis. Residue Gln-158 coordinates substrate. NADP(+) is bound at residue 161-162 (SG). Residue Lys-216 participates in phosphate binding. Arg-238 contributes to the substrate binding site. The active-site Proton acceptor is the His-245. Asn-318 provides a ligand contact to NADP(+).

The protein belongs to the aspartate-semialdehyde dehydrogenase family. In terms of assembly, homodimer.

It catalyses the reaction L-aspartate 4-semialdehyde + phosphate + NADP(+) = 4-phospho-L-aspartate + NADPH + H(+). It participates in amino-acid biosynthesis; L-lysine biosynthesis via DAP pathway; (S)-tetrahydrodipicolinate from L-aspartate: step 2/4. It functions in the pathway amino-acid biosynthesis; L-methionine biosynthesis via de novo pathway; L-homoserine from L-aspartate: step 2/3. Its pathway is amino-acid biosynthesis; L-threonine biosynthesis; L-threonine from L-aspartate: step 2/5. Catalyzes the NADPH-dependent formation of L-aspartate-semialdehyde (L-ASA) by the reductive dephosphorylation of L-aspartyl-4-phosphate. The sequence is that of Aspartate-semialdehyde dehydrogenase from Aquifex aeolicus (strain VF5).